The chain runs to 289 residues: Ribosomal protein L11 methyltransferase (289 aa).

S-adenosyl-L-methionine contacts are provided by threonine 142, glycine 163, aspartate 185, and asparagine 226.

The protein belongs to the methyltransferase superfamily. PrmA family.

It localises to the cytoplasm. It carries out the reaction L-lysyl-[protein] + 3 S-adenosyl-L-methionine = N(6),N(6),N(6)-trimethyl-L-lysyl-[protein] + 3 S-adenosyl-L-homocysteine + 3 H(+). Methylates ribosomal protein L11. The protein is Ribosomal protein L11 methyltransferase of Legionella pneumophila (strain Paris).